The chain runs to 300 residues: Transcription initiation factor IIB (300 aa).

The TFIIB-type zinc-finger motif lies at 2-34 (TKQKVCPVCGSTEFIYDPERGEIVCARCGYVIE). Zn(2+) is bound by residues cysteine 7, cysteine 10, cysteine 26, and cysteine 29. Repeat copies occupy residues 114–197 (SELD…ARNL) and 210–291 (DYVN…ELVE).

The protein belongs to the TFIIB family.

In terms of biological role, stabilizes TBP binding to an archaeal box-A promoter. Also responsible for recruiting RNA polymerase II to the pre-initiation complex (DNA-TBP-TFIIB). The sequence is that of Transcription initiation factor IIB from Pyrococcus horikoshii (strain ATCC 700860 / DSM 12428 / JCM 9974 / NBRC 100139 / OT-3).